We begin with the raw amino-acid sequence, 171 residues long: ATP synthase subunit b 2 (171 aa).

Residues 9-29 (APWHHPVFWVAVAFVLFFVLF) form a helical membrane-spanning segment.

It belongs to the ATPase B chain family. F-type ATPases have 2 components, F(1) - the catalytic core - and F(0) - the membrane proton channel. F(1) has five subunits: alpha(3), beta(3), gamma(1), delta(1), epsilon(1). F(0) has three main subunits: a(1), b(2) and c(10-14). The alpha and beta chains form an alternating ring which encloses part of the gamma chain. F(1) is attached to F(0) by a central stalk formed by the gamma and epsilon chains, while a peripheral stalk is formed by the delta and b chains.

It localises to the cell inner membrane. Its function is as follows. F(1)F(0) ATP synthase produces ATP from ADP in the presence of a proton or sodium gradient. F-type ATPases consist of two structural domains, F(1) containing the extramembraneous catalytic core and F(0) containing the membrane proton channel, linked together by a central stalk and a peripheral stalk. During catalysis, ATP synthesis in the catalytic domain of F(1) is coupled via a rotary mechanism of the central stalk subunits to proton translocation. Functionally, component of the F(0) channel, it forms part of the peripheral stalk, linking F(1) to F(0). The polypeptide is ATP synthase subunit b 2 (Granulibacter bethesdensis (strain ATCC BAA-1260 / CGDNIH1)).